The chain runs to 1518 residues: MYGTWFTTGKVTDLLARTGLDRVPVWVPVVLGVVLMAFVGSVRIDPALQGWVSVGTVTLLLVLNRRRGRGITVFLMMLSLLVSLRYIVWRLTATVQFSNWLQTALAVLLLLAEAYALMTLCLSYFQMAWPLRRREHPLPEDMAQWPSVDVFVPSYNEELSLVRSTVLGALDLDWPADRLNVYILDDGRRKAFHDFAVEAGAGYIIRAENNHAKAGNLNHALAVTDSPFAVIFDCDHVPTRGFLRRTIGWMMADPNLALLQTPHHFYAPDPFQRNLAGGMHVPPEGNMFYGLVQDGNDFWDATFFCGSCAIIRREAVMGIGGFATETVTEDAHTALKMQRRGWGTAYLREPLAAGLATERLILHIGQRVRWARGMIQIMRLDNPMLGAGLRWEQRLCYLSAMSHFLFAIPRLTFLVSPLAFLFLGQNIIAASPLAISVYALPHIFHSVITLSRIEGRWRYSFWSEIYETSLALFLVRITIVTLLQPHKGKFNVTDKGGLLARGYFDWDAVYPNVILAGVLCAALLRGVFGIVWQFHDRLALQSFILNTLWVVISLIIVLASIAVGRETRQTRNAPRVSVRLPVVVTDAHGRQMEGHTHDISLGGLAVGTRLATPDMVGGEVTVRYDSARDGIHVGVPARVLDARDGTLRLRWAVRDLEDERQVVSMVFGRNDAWAGWADFAPDRPLRSLAMVFRSIGGLLRRRPAEAPRALHEMGEGELPATEEKLEKQSFVLKPVPRSARHGATASAALFVAFTALVPAAMAQEAPSPDQSGVTAETPFGDSNTGVVPDALPAIDPAVADRISDAEVTRTLTFRNLGATTGPLTLRGYSPLQGLDVVVPANRVVTHAQLTLSGALSPSLLPEASAVTVTLNEQYVGTLKVDPQHPQFGPVSFDIDPLYFTGDNKLNFHFAGEYRRDCNDLFNEILWARISDMSRITLTTVRITPERKLSRLPAPFFDPNQRSTLRVPVVLPATGDRGALRAAGLVASWFGRIADFRKLSFPVSTTIPASGNAVEVGVNLPVDAEGGRPAGPMLAEVANPNDRWGTVLVVTGRTAQEVEVAARALVFSPDTLGGVASKVVSDVSLETRHPYDAPAFVPTDRPVRFGELVGAADLQGGGFAPAGMTLPFHLPPDLYTWRGRPFLMNMWVRAPGGPVVDLETSRVDVSLNNNYLQSYTLSPPGLWRKWSERLVNQHAGAVGHVTALPPWLLFGQNQLQFNFDARPIDRGACRRTPGDIHMSVDSDSTLDFRRGYHFAEMPNLSYFAEAAFPFSRMADLSETTVVLPDHPDTGTTGAFLDLMGFFGASTWYPAAGVTVMGADEVAHTPPKGDIVVLGTAAQLGGAASGLLARSPYVIHDRHITVGQRMGLQGIWYLFQDHDHAGLKDGVTANLNAPIAEAGVLLAAQSPYDSQRSVVAFTGDTPERIHDLVLSLRNKGDLPSLQGDLVLKNGDRFTSYRTAPVYTVGSLPLWLRLDWFLGHHPSALYLAGLAGAGLAALGVWAWLRGWSRKRIARDDLTGEL.

A catalytic region spans residues 1–731 (MYGTWFTTGK…EEKLEKQSFV (731 aa)). Transmembrane regions (helical) follow at residues 24–44 (PVWVPVVLGVVLMAFVGSVRI), 71–91 (ITVFLMMLSLLVSLRYIVWRL), and 105–125 (LAVLLLLAEAYALMTLCLSYF). Residues 144-237 (QWPSVDVFVP…FAVIFDCDHV (94 aa)) are catalytic subdomain A. Aspartate 186 is a catalytic residue. Positions 233 and 235 each coordinate substrate. Residues 314–374 (EAVMGIGGFA…GQRVRWARGM (61 aa)) are catalytic subdomain B. Aspartate 330 is an active-site residue. 5 helical membrane passes run 404–424 (FLFAIPRLTFLVSPLAFLFLG), 427–447 (IIAASPLAISVYALPHIFHSV), 465–485 (IYETSLALFLVRITIVTLLQP), 514–534 (ILAGVLCAALLRGVFGIVWQF), and 543–563 (FILNTLWVVISLIIVLASIAV). A PilZ domain is found at 569 to 668 (QTRNAPRVSV…ERQVVSMVFG (100 aa)). A cyclic di-GMP binding domain region spans residues 732–1518 (LKPVPRSARH…IARDDLTGEL (787 aa)). A disordered region spans residues 765 to 785 (APSPDQSGVTAETPFGDSNTG). Over residues 768-785 (PDQSGVTAETPFGDSNTG) the composition is skewed to polar residues. A helical transmembrane segment spans residues 1481–1501 (ALYLAGLAGAGLAALGVWAWL).

It in the N-terminal section; belongs to the glycosyltransferase 2 family. The protein in the C-terminal section; belongs to the AcsB/BcsB family.

Its subcellular location is the cell inner membrane. The catalysed reaction is [(1-&gt;4)-beta-D-glucosyl](n) + UDP-alpha-D-glucose = [(1-&gt;4)-beta-D-glucosyl](n+1) + UDP + H(+). It functions in the pathway glycan metabolism; bacterial cellulose biosynthesis. This is Putative cellulose synthase 2 (bcsABII-A) from Komagataeibacter xylinus (Gluconacetobacter xylinus).